The chain runs to 155 residues: Protein FAM162B (155 aa).

The helical transmembrane segment at 95-114 (VKACYIMMGLTIFACLVMIV) threads the bilayer.

This sequence belongs to the UPF0389 family.

It localises to the membrane. This is Protein FAM162B (fam162b) from Danio rerio (Zebrafish).